Consider the following 370-residue polypeptide: Homospermidine synthase 1 (370 aa).

The protein belongs to the deoxyhypusine synthase family. Homotetramer. NAD(+) serves as cofactor. In terms of processing, the N-terminus is blocked. As to expression, expressed in roots.

The enzyme catalyses putrescine + spermidine = sym-homospermidine + propane-1,3-diamine. It functions in the pathway alkaloid biosynthesis; pyrrolizidine alkaloid biosynthesis. Functionally, catalyzes the transfer of an aminobutyl unit from spermidine onto putrescine. The resulting polyamine homospermidine is a precursor in the biosynthesis of pyrrolizidine alkaloids. The protein is Homospermidine synthase 1 (HSS1) of Senecio vernalis (Spring groundsel).